The chain runs to 101 residues: Small ribosomal subunit protein uS14 (101 aa).

It belongs to the universal ribosomal protein uS14 family. Part of the 30S ribosomal subunit. Contacts proteins S3 and S10.

In terms of biological role, binds 16S rRNA, required for the assembly of 30S particles and may also be responsible for determining the conformation of the 16S rRNA at the A site. The sequence is that of Small ribosomal subunit protein uS14 from Paraburkholderia phymatum (strain DSM 17167 / CIP 108236 / LMG 21445 / STM815) (Burkholderia phymatum).